The sequence spans 187 residues: Elongation factor P (187 aa).

Belongs to the elongation factor P family.

It is found in the cytoplasm. The protein operates within protein biosynthesis; polypeptide chain elongation. Functionally, involved in peptide bond synthesis. Stimulates efficient translation and peptide-bond synthesis on native or reconstituted 70S ribosomes in vitro. Probably functions indirectly by altering the affinity of the ribosome for aminoacyl-tRNA, thus increasing their reactivity as acceptors for peptidyl transferase. In Prochlorococcus marinus (strain NATL1A), this protein is Elongation factor P.